The chain runs to 243 residues: UPF0758 protein Ava_0172 (243 aa).

One can recognise an MPN domain in the interval 113–235; the sequence is PIDSPVAAVA…HQSLREVTTL (123 aa). Zn(2+) contacts are provided by His-184, His-186, and Asp-197. Residues 184 to 197 carry the JAMM motif motif; it reads HNHPSGNVEPSPED.

Belongs to the UPF0758 family.

This chain is UPF0758 protein Ava_0172, found in Trichormus variabilis (strain ATCC 29413 / PCC 7937) (Anabaena variabilis).